Reading from the N-terminus, the 494-residue chain is Cheilanthifoline synthase (494 aa).

The chain crosses the membrane as a helical span at residues 4 to 24; the sequence is TIWLIISTVIIVLGIAKFLLG. C437 is a binding site for heme.

The protein belongs to the cytochrome P450 family. Heme is required as a cofactor. Expressed in roots and at lower levels in stems, leaves and plantlets.

It localises to the endoplasmic reticulum membrane. The enzyme catalyses (S)-scoulerine + reduced [NADPH--hemoprotein reductase] + O2 = (S)-cheilanthifoline + oxidized [NADPH--hemoprotein reductase] + 2 H2O + H(+). Its function is as follows. Methylenedioxy bridge-forming cytochrome P450 involved in the biosynthesis of isoquinoline alkaloids. Converts (S)-scoulerine into (S)-cheilanthifoline, a precursor of sanguinarine. Catalyzes an oxidative reaction that does not incorporate oxygen into the product. In Argemone mexicana (Mexican prickly poppy), this protein is Cheilanthifoline synthase.